The following is an 820-amino-acid chain: ATP-dependent RNA helicase drs1 (820 aa).

The tract at residues 1–278 (MAPPKKRTAP…IESEVDAEEE (278 aa)) is disordered. The segment covering 83–102 (AASEPEEGSEEEEDAGEDDG) has biased composition (acidic residues). Residues 130 to 145 (DETKDGAKKNGDKQGV) are compositionally biased toward basic and acidic residues. Composition is skewed to acidic residues over residues 172–185 (ESED…DDAS), 232–245 (DSED…DAAS), and 260–277 (VASD…DAEE). The Q motif motif lies at 302–330 (KSFQEFNLSRPILRGLAAVNFTNPTPIQR). The 175-residue stretch at 333-507 (IPVALLGKDI…RVGLNRPVRL (175 aa)) folds into the Helicase ATP-binding domain. 346-353 (AVTGSGKT) is an ATP binding site. Residues 455-458 (DEAD) carry the DEAD box motif. Residues 537-714 (YLLHLCKEVY…KIEKQLAQAE (178 aa)) form the Helicase C-terminal domain. Residues 681 to 729 (AVADRWAQKAKDLEEEINAVLEEEKIEKQLAQAEMQVTRSENMIKHEAE) adopt a coiled-coil conformation. The tract at residues 759-820 (LDSVKSKKEK…KKENKKKGKK (62 aa)) is disordered. The span at 769-786 (VRLSNKDKKRLDDSRQRN) shows a compositional bias: basic and acidic residues. Positions 806-820 (KIQKGKKENKKKGKK) are enriched in basic residues.

This sequence belongs to the DEAD box helicase family. DDX27/DRS1 subfamily. As to quaternary structure, associates with pre-ribosomal particles.

It localises to the nucleus. The protein resides in the nucleolus. It catalyses the reaction ATP + H2O = ADP + phosphate + H(+). Its function is as follows. ATP-binding RNA helicase involved in ribosome assembly. In Aspergillus oryzae (strain ATCC 42149 / RIB 40) (Yellow koji mold), this protein is ATP-dependent RNA helicase drs1 (drs1).